The chain runs to 652 residues: UvrABC system protein C (652 aa).

The GIY-YIG domain maps to 20-99 (PEPGCYLMRD…IKNHQPHFNV (80 aa)). The 36-residue stretch at 209–244 (DELQRLLDEQMNRYAERLDFESAARVRDQLQGLDQL) folds into the UVR domain.

The protein belongs to the UvrC family. As to quaternary structure, interacts with UvrB in an incision complex.

The protein resides in the cytoplasm. Its function is as follows. The UvrABC repair system catalyzes the recognition and processing of DNA lesions. UvrC both incises the 5' and 3' sides of the lesion. The N-terminal half is responsible for the 3' incision and the C-terminal half is responsible for the 5' incision. This chain is UvrABC system protein C, found in Parasynechococcus marenigrum (strain WH8102).